A 127-amino-acid chain; its full sequence is Small ribosomal subunit protein eS8 (127 aa).

The protein belongs to the eukaryotic ribosomal protein eS8 family. As to quaternary structure, part of the 30S ribosomal subunit.

This Nanoarchaeum equitans (strain Kin4-M) protein is Small ribosomal subunit protein eS8.